We begin with the raw amino-acid sequence, 86 residues long: uncharacterized protein (86 aa).

It is found in the mitochondrion. This is an uncharacterized protein from Marchantia polymorpha (Common liverwort).